The sequence spans 194 residues: Probable proteasome subunit beta type-4 (194 aa).

This sequence belongs to the peptidase T1B family. As to quaternary structure, the 26S proteasome consists of a 20S proteasome core and two 19S regulatory subunits. The 20S proteasome core is composed of 28 subunits that are arranged in four stacked rings, resulting in a barrel-shaped structure. The two end rings are each formed by seven alpha subunits, and the two central rings are each formed by seven beta subunits. The catalytic chamber with the active sites is on the inside of the barrel.

It localises to the cytoplasm. It is found in the nucleus. Its function is as follows. Non-catalytic component of the proteasome, a multicatalytic proteinase complex which is characterized by its ability to cleave peptides with Arg, Phe, Tyr, Leu, and Glu adjacent to the leaving group at neutral or slightly basic pH. The proteasome has an ATP-dependent proteolytic activity. The sequence is that of Probable proteasome subunit beta type-4 (PRO2) from Meyerozyma guilliermondii (strain ATCC 6260 / CBS 566 / DSM 6381 / JCM 1539 / NBRC 10279 / NRRL Y-324) (Yeast).